Reading from the N-terminus, the 423-residue chain is Protein CLP1 homolog (423 aa).

ATP contacts are provided by residues Glu19, Lys60, and Asp122–Thr127.

Belongs to the Clp1 family. Clp1 subfamily.

The protein localises to the nucleus. In terms of biological role, required for endonucleolytic cleavage during polyadenylation-dependent pre-mRNA 3'-end formation. This is Protein CLP1 homolog (cbc) from Anopheles gambiae (African malaria mosquito).